The sequence spans 285 residues: Probable endonuclease 4 (285 aa).

Zn(2+) is bound by residues His-69, His-109, Glu-145, Asp-179, His-182, His-216, Asp-229, His-231, and Glu-261.

The protein belongs to the AP endonuclease 2 family. Zn(2+) is required as a cofactor.

It catalyses the reaction Endonucleolytic cleavage to 5'-phosphooligonucleotide end-products.. Functionally, endonuclease IV plays a role in DNA repair. It cleaves phosphodiester bonds at apurinic or apyrimidinic (AP) sites, generating a 3'-hydroxyl group and a 5'-terminal sugar phosphate. This Salmonella typhimurium (strain LT2 / SGSC1412 / ATCC 700720) protein is Probable endonuclease 4.